Consider the following 176-residue polypeptide: Disulfide bond formation protein B (176 aa).

Residues 1-11 lie on the Cytoplasmic side of the membrane; it reads MLQLTTYRNLQ. The chain crosses the membrane as a helical span at residues 12–28; that stretch reads VFLVIMTAIGMSFALFF. Residues 29 to 46 lie on the Periplasmic side of the membrane; it reads LQRYMGFSPCPLCIFQRI. A disulfide bridge links cysteine 38 with cysteine 41. A helical membrane pass occupies residues 47 to 63; it reads GLMIMGGFALIAALFHP. Over 64 to 70 the chain is Cytoplasmic; the sequence is KSMVIRL. Residues 71 to 88 form a helical membrane-spanning segment; the sequence is LLWLGSLAGIGWAAIVAG. Topologically, residues 89-145 are periplasmic; it reads RHVWLQHLPADQVPSCGPGLDYWLDTLPMQQVLKEVFAGSGECASIEWTFLGLSIPE. The cysteines at positions 104 and 131 are disulfide-linked. Residues 146–164 form a helical membrane-spanning segment; that stretch reads QSLILFSILILTHLLILWR. Residues 165-176 are Cytoplasmic-facing; sequence IVRPSTPKPLAR.

This sequence belongs to the DsbB family.

The protein resides in the cell inner membrane. In terms of biological role, required for disulfide bond formation in some periplasmic proteins. Acts by oxidizing the DsbA protein. The protein is Disulfide bond formation protein B of Psychrobacter arcticus (strain DSM 17307 / VKM B-2377 / 273-4).